The sequence spans 690 residues: MAHNYLLEIGLEEIPAHVVTPSIKQLVQKVTAFLKENRLTYDSIDHFSTPRRLAIRINGLGDQQPDIEEDAKGPARKIAQDADGNWTKAAIGFTRGQGLTVDDITFKTIKGTDYVYVHKLIKGKMTKEILTGLKEVVESINFPTMMKWANFDFKYVRPIRWLVSILDEEVLPFSILDVTAGRRTEGHRFLGEAVELANAEEYEAKLHDQFVIVDADERKQLISNQIKAIAESNRWNVTPNPGLLEEVNNLVEWPTAFNGGFDEKYLAIPEEVLITSMRDHQRFFFVRDQAGKLLPNFISVRNGNEEFIENVVRGNEKVLTARLEDAAFFYEEDQKHDINYYVDRLKKVSFHDKIGSMYEKLQRVNSIAKVIGNTLNLNQTELDDIDRATMIYKFDLVTGMVGEFSELQGVMGEKYAQLNGENQAVAQAIREHYMPNSAEGDLPESVTGAVVALADKFDNIFSFFSAGMIPSGSNDPYALRRHAYGIVRILNSRDWQLDLNQFKSQVKTELAENGTAFGVDVDQNFDQVLNFFNDRIKQLLDHQKISHDIVETVLTGNNHDVTEIIEAAQVLADAKASSTFKDDIEALTRVQRIATKNEESGELNVDPQLFNNASEGELFDQIIKIEAANNLTMSQLFAKLCELTPAISKYFDATMVMDKDENIKRNRLNMMSRLANLILKIGDLTNVLVK.

The protein belongs to the class-II aminoacyl-tRNA synthetase family. In terms of assembly, tetramer of two alpha and two beta subunits.

The protein localises to the cytoplasm. It carries out the reaction tRNA(Gly) + glycine + ATP = glycyl-tRNA(Gly) + AMP + diphosphate. This is Glycine--tRNA ligase beta subunit from Pediococcus pentosaceus (strain ATCC 25745 / CCUG 21536 / LMG 10740 / 183-1w).